The chain runs to 206 residues: Translation machinery-associated protein 22 (206 aa).

Residues 98-169 (VVIKREARTK…EVEKYIHSLL (72 aa)) form the SUI1 domain. The disordered stretch occupies residues 184–206 (SQKKKKKPTDEANSNNNNNNNNK). A compositionally biased stretch (low complexity) spans 196 to 206 (NSNNNNNNNNK).

Belongs to the DENR family. Interacts with the 40S ribosomal subunit.

It is found in the cytoplasm. The chain is Translation machinery-associated protein 22 (TMA22) from Vanderwaltozyma polyspora (strain ATCC 22028 / DSM 70294 / BCRC 21397 / CBS 2163 / NBRC 10782 / NRRL Y-8283 / UCD 57-17) (Kluyveromyces polysporus).